The sequence spans 328 residues: Aspartate carbamoyltransferase catalytic subunit (328 aa).

Positions 64 and 65 each coordinate carbamoyl phosphate. K92 serves as a coordination point for L-aspartate. Residues R114, H144, and Q147 each coordinate carbamoyl phosphate. L-aspartate contacts are provided by R177 and R232. 2 residues coordinate carbamoyl phosphate: G273 and P274.

The protein belongs to the aspartate/ornithine carbamoyltransferase superfamily. ATCase family. In terms of assembly, heterododecamer (2C3:3R2) of six catalytic PyrB chains organized as two trimers (C3), and six regulatory PyrI chains organized as three dimers (R2).

It catalyses the reaction carbamoyl phosphate + L-aspartate = N-carbamoyl-L-aspartate + phosphate + H(+). Its pathway is pyrimidine metabolism; UMP biosynthesis via de novo pathway; (S)-dihydroorotate from bicarbonate: step 2/3. In terms of biological role, catalyzes the condensation of carbamoyl phosphate and aspartate to form carbamoyl aspartate and inorganic phosphate, the committed step in the de novo pyrimidine nucleotide biosynthesis pathway. The chain is Aspartate carbamoyltransferase catalytic subunit from Halorhodospira halophila (strain DSM 244 / SL1) (Ectothiorhodospira halophila (strain DSM 244 / SL1)).